The sequence spans 936 residues: Protein translocase subunit SecA (936 aa).

Residues Gln87, 105–109 (GEGKT), and Asp515 each bind ATP. Positions 920, 922, 931, and 932 each coordinate Zn(2+).

This sequence belongs to the SecA family. Monomer and homodimer. Part of the essential Sec protein translocation apparatus which comprises SecA, SecYEG and auxiliary proteins SecDF-YajC and YidC. Zn(2+) is required as a cofactor.

It localises to the cell inner membrane. The protein localises to the cytoplasm. It carries out the reaction ATP + H2O + cellular proteinSide 1 = ADP + phosphate + cellular proteinSide 2.. Part of the Sec protein translocase complex. Interacts with the SecYEG preprotein conducting channel. Has a central role in coupling the hydrolysis of ATP to the transfer of proteins into and across the cell membrane, serving both as a receptor for the preprotein-SecB complex and as an ATP-driven molecular motor driving the stepwise translocation of polypeptide chains across the membrane. The protein is Protein translocase subunit SecA of Paraburkholderia phymatum (strain DSM 17167 / CIP 108236 / LMG 21445 / STM815) (Burkholderia phymatum).